The chain runs to 662 residues: UPF0313 protein CPF_1407 (662 aa).

Residues 296 to 567 enclose the Radical SAM core domain; it reads AIEEVKFSIV…AMQRALLQFK (272 aa). [4Fe-4S] cluster is bound by residues Cys-310, Cys-314, and Cys-317. Residues 596 to 662 are disordered; it reads IRDKNSFGKG…QRSSKGKKRR (67 aa). Over residues 618-632 the composition is skewed to basic and acidic residues; that stretch reads SRNENSGRRESEDKK. Basic residues predominate over residues 633–644; it reads RSSHSKKQRGNK.

Belongs to the UPF0313 family. It depends on [4Fe-4S] cluster as a cofactor.

The chain is UPF0313 protein CPF_1407 from Clostridium perfringens (strain ATCC 13124 / DSM 756 / JCM 1290 / NCIMB 6125 / NCTC 8237 / Type A).